The following is a 382-amino-acid chain: Lipid-A-disaccharide synthase (382 aa).

Belongs to the LpxB family.

It carries out the reaction 2-N,3-O-bis[(3R)-3-hydroxytetradecanoyl]-alpha-D-glucosaminyl 1-phosphate + UDP-2-N,3-O-bis[(3R)-3-hydroxytetradecanoyl]-alpha-D-glucosamine = lipid A disaccharide (E. coli) + UDP + H(+). It catalyses the reaction a lipid X + a UDP-2-N,3-O-bis[(3R)-3-hydroxyacyl]-alpha-D-glucosamine = a lipid A disaccharide + UDP + H(+). The protein operates within glycolipid biosynthesis; lipid IV(A) biosynthesis; lipid IV(A) from (3R)-3-hydroxytetradecanoyl-[acyl-carrier-protein] and UDP-N-acetyl-alpha-D-glucosamine: step 5/6. Functionally, condensation of UDP-2,3-diacylglucosamine and 2,3-diacylglucosamine-1-phosphate to form lipid A disaccharide, a precursor of lipid A, a phosphorylated glycolipid that anchors the lipopolysaccharide to the outer membrane of the cell. The polypeptide is Lipid-A-disaccharide synthase (Escherichia coli (strain SMS-3-5 / SECEC)).